The sequence spans 232 residues: Lipoprotein-releasing system ATP-binding protein LolD (232 aa).

The ABC transporter domain maps to 11 to 232; the sequence is IEVTDLQRAF…LHDGRLIEEY (222 aa). 47–54 lines the ATP pocket; the sequence is GPSGAGKS.

This sequence belongs to the ABC transporter superfamily. Lipoprotein translocase (TC 3.A.1.125) family. As to quaternary structure, the complex is composed of two ATP-binding proteins (LolD) and two transmembrane proteins (LolC and LolE).

It localises to the cell inner membrane. Its function is as follows. Part of the ABC transporter complex LolCDE involved in the translocation of mature outer membrane-directed lipoproteins, from the inner membrane to the periplasmic chaperone, LolA. Responsible for the formation of the LolA-lipoprotein complex in an ATP-dependent manner. The polypeptide is Lipoprotein-releasing system ATP-binding protein LolD (Zymomonas mobilis subsp. mobilis (strain ATCC 31821 / ZM4 / CP4)).